The following is a 966-amino-acid chain: Dynamin-like GTPase OPA1, mitochondrial (966 aa).

The transit peptide at 1–86 (MLRAGSVVTC…GGHGYQQHRT (86 aa)) directs the protein to the mitochondrion. The Mitochondrial matrix segment spans residues 87–95 (FWVARLAAR). The helical transmembrane segment at 96-112 (LLKLRYILLGSAVGGGY) threads the bilayer. Residues 113-776 (TAKKTYDEWK…SVIADMVGPD (664 aa)) are Mitochondrial intermembrane-facing. The tract at residues 189 to 217 (ESALRAPDVPPASAAMADSGDKQFKKSSD) is disordered. The span at 207–217 (SGDKQFKKSSD) shows a compositional bias: basic and acidic residues. Positions 213–259 (KKSSDKEKVDQLQEELLRTQLKYQRMLERLEKENKELRKVVLQKDDK) form a coiled coil. Residues 291–567 (QDHLPRVVVV…FWKMVRESVE (277 aa)) enclose the Dynamin-type G domain. A G1 motif region spans residues 301–308 (GDQSAGKT). The GTP site is built by Ser-304, Gly-306, Lys-307, Thr-308, Ser-309, and Gly-323. Residue Thr-308 coordinates Mg(2+). Residues 327-330 (MMTR) are G2 motif. Mg(2+)-binding residues include Thr-329 and Asp-404. The tract at residues 404-407 (DLPG) is G3 motif. A G4 motif region spans residues 473–476 (TKVD). The GTP site is built by Lys-474, Asp-476, and Thr-509. Residues 507 to 510 (VVTG) form a G5 motif region. 2 stalk region regions span residues 595–842 (DRNE…IKDT) and 880–934 (CNDV…VQLI). A paddle region region spans residues 742–862 (TDKPQWDAAI…QKALLHCNLC (121 aa)). The stretch at 777–787 (WKQRWMSWKNR) is an intramembrane region. The Mitochondrial intermembrane segment spans residues 788–966 (TPEQHTRNET…AFIEALHKEK (179 aa)). Cys-862 and Cys-880 are disulfide-bonded. The stretch at 901 to 966 (RQQLTNTEVR…AFIEALHKEK (66 aa)) forms a coiled coil.

This sequence belongs to the TRAFAC class dynamin-like GTPase superfamily. Dynamin/Fzo/YdjA family. Oligomeric complex consisting of membrane-bound and soluble forms of OPA1. In terms of processing, cleaved by OMA1 or YME1L downstream of the transmembrane region in response to different signals to generate soluble forms. Cleaved by OMA1 at position S1 following stress conditions, generating the short soluble form (Dynamin-like GTPase OPA1, short form; S-OPA1).

Its subcellular location is the mitochondrion inner membrane. It localises to the mitochondrion intermembrane space. It catalyses the reaction GTP + H2O = GDP + phosphate + H(+). Its function is as follows. Dynamin-related GTPase that is essential for normal mitochondrial morphology by mediating fusion of the mitochondrial inner membranes, regulating cristae morphology and maintaining respiratory chain function. Exists in two forms: the transmembrane, long form (Dynamin-like GTPase OPA1, long form; L-OPA1), which is tethered to the inner mitochondrial membrane, and the short soluble form (Dynamin-like GTPase OPA1, short form; S-OPA1), which results from proteolytic cleavage and localizes in the intermembrane space. Both forms (L-OPA1 and S-OPA1) cooperate to catalyze the fusion of the mitochondrial inner membrane. The equilibrium between L-OPA1 and S-OPA1 is essential: excess levels of S-OPA1, produced by cleavage by OMA1 following loss of mitochondrial membrane potential, lead to an impaired equilibrium between L-OPA1 and S-OPA1, inhibiting mitochondrial fusion. The balance between L-OPA1 and S-OPA1 also influences cristae shape and morphology. Its role in mitochondrial morphology is required for mitochondrial genome maintenance. Functionally, constitutes the transmembrane long form (L-OPA1) that plays a central role in mitochondrial inner membrane fusion and cristae morphology. L-OPA1 and the soluble short form (S-OPA1) form higher-order helical assemblies that coordinate the fusion of mitochondrial inner membranes. Inner membrane-anchored L-OPA1 molecules initiate membrane remodeling by recruiting soluble S-OPA1 to rapidly polymerize into a flexible cylindrical scaffold encaging the mitochondrial inner membrane. Once at the membrane surface, the formation of S-OPA1 helices induce bilayer curvature. OPA1 dimerization through the paddle region, which inserts into cardiolipin-containing membrane, promotes GTP hydrolysis and the helical assembly of a flexible OPA1 lattice on the membrane, which drives membrane curvature and mitochondrial fusion. Plays a role in the maintenance and remodeling of mitochondrial cristae, some invaginations of the mitochondrial inner membrane that provide an increase in the surface area. Probably acts by forming helical filaments at the inside of inner membrane tubes with the shape and dimensions of crista junctions. Constitutes the soluble short form (S-OPA1) generated by cleavage by OMA1, which plays a central role in mitochondrial inner membrane fusion and cristae morphology. The transmembrane long form (L-OPA1) and the S-OPA1 form higher-order helical assemblies that coordinate the fusion of mitochondrial inner membranes. Inner membrane-anchored L-OPA1 molecules initiate membrane remodeling by recruiting soluble S-OPA1 to rapidly polymerize into a flexible cylindrical scaffold encaging the mitochondrial inner membrane. Once at the membrane surface, the formation of S-OPA1 helices induce bilayer curvature. OPA1 dimerization through the paddle region, which inserts into cardiolipin-containing membrane, promotes GTP hydrolysis and the helical assembly of a flexible OPA1 lattice on the membrane, which drives membrane curvature and mitochondrial fusion. Excess levels of S-OPA1 produced by cleavage by OMA1 following stress conditions that induce loss of mitochondrial membrane potential, lead to an impaired equilibrium between L-OPA1 and S-OPA1, thereby inhibiting mitochondrial fusion. Plays a role in the maintenance and remodeling of mitochondrial cristae, some invaginations of the mitochondrial inner membrane that provide an increase in the surface area. Probably acts by forming helical filaments at the inside of inner membrane tubes with the shape and dimensions of crista junctions. This is Dynamin-like GTPase OPA1, mitochondrial from Danio rerio (Zebrafish).